The primary structure comprises 156 residues: Small ribosomal subunit protein uS7 (156 aa).

It belongs to the universal ribosomal protein uS7 family. Part of the 30S ribosomal subunit. Contacts proteins S9 and S11.

Its function is as follows. One of the primary rRNA binding proteins, it binds directly to 16S rRNA where it nucleates assembly of the head domain of the 30S subunit. Is located at the subunit interface close to the decoding center, probably blocks exit of the E-site tRNA. The sequence is that of Small ribosomal subunit protein uS7 from Hyphomonas neptunium (strain ATCC 15444).